Reading from the N-terminus, the 432-residue chain is Putative D-alanyl-D-alanine carboxypeptidase (432 aa).

A helical; Signal-anchor transmembrane segment spans residues 7–25 (ATVLLTFSLSAFAVEYPVL).

The protein belongs to the peptidase S12 family. YfeW subfamily.

It localises to the cell inner membrane. The catalysed reaction is Preferential cleavage: (Ac)2-L-Lys-D-Ala-|-D-Ala. Also transpeptidation of peptidyl-alanyl moieties that are N-acyl substituents of D-alanine.. This chain is Putative D-alanyl-D-alanine carboxypeptidase, found in Salmonella typhimurium (strain LT2 / SGSC1412 / ATCC 700720).